Reading from the N-terminus, the 543-residue chain is Aspartate/alanine antiporter (543 aa).

10 helical membrane-spanning segments follow: residues 4-26, 33-55, 88-110, 117-139, 159-178, 362-381, 385-407, 428-450, 455-477, and 520-542; these read IGNF…GYLL, SFTL…LGVF, FGAK…AYAC, GPGI…GSSL, IPIV…LIFL, IINY…LGIV, VSGV…VQSI, SIGL…ISAI, ISVL…VICY, and VAPA…IVLL.

This sequence belongs to the AAE transporter (TC 2.A.81) family.

It is found in the cell membrane. Its function is as follows. Catalyzes the electrogenic exchange of aspartate with alanine. The chain is Aspartate/alanine antiporter (aspT) from Tetragenococcus halophilus (Pediococcus halophilus).